A 247-amino-acid chain; its full sequence is 3-oxoacyl-[acyl-carrier-protein] reductase MabA (247 aa).

Residues R25–I27, R47, D61–V62, G90, Y153, K157, I186, and R197 each bind NADP(+). Residue Y153 is the Proton acceptor of the active site.

Belongs to the short-chain dehydrogenases/reductases (SDR) family. As to quaternary structure, homotetramer.

The protein localises to the secreted. The protein resides in the cell wall. The enzyme catalyses a (3R)-hydroxyacyl-[ACP] + NADP(+) = a 3-oxoacyl-[ACP] + NADPH + H(+). Its pathway is lipid metabolism; mycolic acid biosynthesis. Its function is as follows. Part of the mycobacterial fatty acid elongation system FAS-II, which is involved in mycolic acid biosynthesis. Catalyzes the NADPH-dependent reduction of beta-ketoacyl derivatives, the second step of the FAS-II elongation cycle. The protein is 3-oxoacyl-[acyl-carrier-protein] reductase MabA of Mycobacterium bovis (strain ATCC BAA-935 / AF2122/97).